A 142-amino-acid polypeptide reads, in one-letter code: Large ribosomal subunit protein uL11 (142 aa).

This sequence belongs to the universal ribosomal protein uL11 family. As to quaternary structure, part of the ribosomal stalk of the 50S ribosomal subunit. Interacts with L10 and the large rRNA to form the base of the stalk. L10 forms an elongated spine to which L12 dimers bind in a sequential fashion forming a multimeric L10(L12)X complex. One or more lysine residues are methylated.

Functionally, forms part of the ribosomal stalk which helps the ribosome interact with GTP-bound translation factors. The polypeptide is Large ribosomal subunit protein uL11 (Buchnera aphidicola subsp. Schizaphis graminum (strain Sg)).